We begin with the raw amino-acid sequence, 441 residues long: Coiled-coil domain-containing protein 91 (441 aa).

Residues 1–16 (MDDDDFGGFEAAETFD) are GGA1-binding motif. The tract at residues 1-26 (MDDDDFGGFEAAETFDGGSGETQTTS) is disordered. Residues Ser-43 and Ser-46 each carry the phosphoserine modification. 2 coiled-coil regions span residues 130–209 (SNIQ…GHEA) and 249–407 (ELLN…KRLD). Residues 210 to 413 (LSIIVDEYKA…KRLDQVIRQR (204 aa)) form a homodimerization region.

In terms of assembly, homodimer. Interacts with GGA1, GGA2 and AP1G1. As to expression, widely expressed.

Its subcellular location is the membrane. The protein localises to the golgi apparatus. It localises to the trans-Golgi network membrane. The protein resides in the trans-Golgi network. Functionally, involved in the regulation of membrane traffic through the trans-Golgi network (TGN). Functions in close cooperation with the GGAs in the sorting of hydrolases to lysosomes. This is Coiled-coil domain-containing protein 91 (CCDC91) from Homo sapiens (Human).